The sequence spans 107 residues: Iron-sulfur cluster assembly protein CyaY (107 aa).

It belongs to the frataxin family.

Functionally, involved in iron-sulfur (Fe-S) cluster assembly. May act as a regulator of Fe-S biogenesis. This Yersinia pseudotuberculosis serotype O:1b (strain IP 31758) protein is Iron-sulfur cluster assembly protein CyaY.